The following is a 201-amino-acid chain: Natural cytotoxicity triggering receptor 3 (201 aa).

Residues 1–18 form the signal peptide; that stretch reads MAWMLLLILIMVHPGSCA. In terms of domain architecture, Ig-like spans 19 to 126; sequence LWVSQPPEIR…VGTGNGTRLV (108 aa). Over 19–135 the chain is Extracellular; the sequence is LWVSQPPEIR…VVEKEHPQLG (117 aa). Cysteine 39 and cysteine 108 are disulfide-bonded. N-linked (GlcNAc...) asparagine glycosylation is found at asparagine 42 and asparagine 121. Residues 136 to 156 form a helical membrane-spanning segment; that stretch reads AGTVLLLRAGFYAVSFLSVAV. The Cytoplasmic portion of the chain corresponds to 157-201; sequence GSTVYYQGKCLTWKGPRRQLPAVVPAPLPPPCGSSAHLLPPVPGG.

It belongs to the natural cytotoxicity receptor (NCR) family. In terms of assembly, homodimer in the unliganted form. Interacts with CD3Z. Interacts with and is activated by binding to NCR3LG1. Interacts with and is activated by binding to BAG6. Interacts with and is inhibited by binding to LGALS3. In terms of tissue distribution, selectively expressed by all resting and activated NK cells and weakly expressed in spleen.

The protein resides in the cell membrane. In terms of biological role, cell membrane receptor of natural killer/NK cells that is activated by binding of extracellular ligands including BAG6 and NCR3LG1. Stimulates NK cells cytotoxicity toward neighboring cells producing these ligands. It controls, for instance, NK cells cytotoxicity against tumor cells. Engagement of NCR3 by BAG6 also promotes myeloid dendritic cells (DC) maturation, both through killing DCs that did not acquire a mature phenotype, and inducing the release by NK cells of TNFA and IFNG which promote DC maturation. This is Natural cytotoxicity triggering receptor 3 from Homo sapiens (Human).